Here is a 982-residue protein sequence, read N- to C-terminus: Presequence protease, mitochondrial (982 aa).

Residues 1–7 (MFQIRNY) constitute a mitochondrion transit peptide. His84 lines the Zn(2+) pocket. The Proton acceptor role is filled by Glu87. His88 contributes to the Zn(2+) binding site. Glu160 is an active-site residue. Glu185 lines the Zn(2+) pocket.

It belongs to the peptidase M16 family. PreP subfamily. In terms of assembly, monomer and homodimer; homodimerization is induced by binding of the substrate. The cofactor is Zn(2+).

The protein localises to the mitochondrion intermembrane space. It localises to the mitochondrion matrix. Functionally, degrades mitochondrial transit peptides after their cleavage in the intermembrane space or in the matrix, and presequence peptides; clearance of these peptides is required to keep the presequence processing machinery running. Preferentially cleaves the N-terminal side of paired basic amino acid residues. Also degrades other unstructured peptides. May function as an ATP-dependent peptidase as opposed to a metalloendopeptidase. The sequence is that of Presequence protease, mitochondrial (CYM1) from Kluyveromyces lactis (strain ATCC 8585 / CBS 2359 / DSM 70799 / NBRC 1267 / NRRL Y-1140 / WM37) (Yeast).